The sequence spans 122 residues: Large ribosomal subunit protein bL17 (122 aa).

The protein belongs to the bacterial ribosomal protein bL17 family. As to quaternary structure, part of the 50S ribosomal subunit. Contacts protein L32.

The sequence is that of Large ribosomal subunit protein bL17 from Neisseria meningitidis serogroup B (strain ATCC BAA-335 / MC58).